Reading from the N-terminus, the 618-residue chain is Probable N-acetylgalactosaminyltransferase 6 (618 aa).

Over 1 to 16 (MIASLIRSRRRSRRCV) the chain is Cytoplasmic. Residues 17–39 (VYSVFLFGFLALWGSFALALVFL) form a helical; Signal-anchor for type II membrane protein membrane-spanning segment. At 40–618 (SDMYIGEDQI…TEMSWLPEHP (579 aa)) the chain is on the lumenal side. N81 and N149 each carry an N-linked (GlcNAc...) asparagine glycan. Disulfide bonds link C147–C381 and C372–C452. Residues 156-267 (LPTTSVIIVY…KGWLEPLLTR (112 aa)) are catalytic subdomain A. Substrate contacts are provided by D197 and R228. D251 contacts Mn(2+). A substrate-binding site is contributed by S252. H253 lines the Mn(2+) pocket. Residues 327–389 (PIESPTMAGG…PCSHVGHVFR (63 aa)) are catalytic subdomain B. W358 is a binding site for substrate. Mn(2+) is bound at residue H386. Position 389 (R389) interacts with substrate. The region spanning 474–609 (RFGRMTSSSN…SNDRQNWTIT (136 aa)) is the Ricin B-type lectin domain. Residue N483 is glycosylated (N-linked (GlcNAc...) asparagine). Disulfide bonds link C487-C505, C530-C550, and C575-C597. A glycan (N-linked (GlcNAc...) asparagine) is linked at N605.

The protein belongs to the glycosyltransferase 2 family. GalNAc-T subfamily. Requires Mn(2+) as cofactor.

The protein resides in the golgi apparatus membrane. Its pathway is protein modification; protein glycosylation. Probable glycopeptide transferase involved in O-linked oligosaccharide biosynthesis. Glycopeptide transferases catalyze the transfer of an N-acetyl-D-galactosamine residue to an already glycosylated peptide. In contrast to other members of the family, it does not act as a peptide transferase that transfers GalNAc onto serine or threonine residue on peptides that have been tested. Some peptide transferase activity is however not excluded, considering that its appropriate peptide substrate may remain unidentified. The sequence is that of Probable N-acetylgalactosaminyltransferase 6 (gly-6) from Caenorhabditis elegans.